Here is a 122-residue protein sequence, read N- to C-terminus: Large ribosomal subunit protein uL14 (122 aa).

The protein belongs to the universal ribosomal protein uL14 family. As to quaternary structure, part of the 50S ribosomal subunit. Forms a cluster with proteins L3 and L19. In the 70S ribosome, L14 and L19 interact and together make contacts with the 16S rRNA in bridges B5 and B8.

Its function is as follows. Binds to 23S rRNA. Forms part of two intersubunit bridges in the 70S ribosome. This Cupriavidus metallidurans (strain ATCC 43123 / DSM 2839 / NBRC 102507 / CH34) (Ralstonia metallidurans) protein is Large ribosomal subunit protein uL14.